The following is a 475-amino-acid chain: Sulfate adenylyltransferase subunit 1 (475 aa).

Residues 25 to 239 enclose the tr-type G domain; the sequence is KSLLRFLTCG…EVLETVEIQR (215 aa). The segment at 34–41 is G1; sequence GSVDDGKS. 34–41 lines the GTP pocket; the sequence is GSVDDGKS. The interval 92–96 is G2; the sequence is GITID. The G3 stretch occupies residues 113 to 116; the sequence is DTPG. GTP is bound by residues 113–117 and 168–171; these read DTPGH and NKMD. The segment at 168–171 is G4; it reads NKMD. The tract at residues 206–208 is G5; the sequence is SAL.

The protein belongs to the TRAFAC class translation factor GTPase superfamily. Classic translation factor GTPase family. CysN/NodQ subfamily. Heterodimer composed of CysD, the smaller subunit, and CysN.

The enzyme catalyses sulfate + ATP + H(+) = adenosine 5'-phosphosulfate + diphosphate. The protein operates within sulfur metabolism; hydrogen sulfide biosynthesis; sulfite from sulfate: step 1/3. Functionally, with CysD forms the ATP sulfurylase (ATPS) that catalyzes the adenylation of sulfate producing adenosine 5'-phosphosulfate (APS) and diphosphate, the first enzymatic step in sulfur assimilation pathway. APS synthesis involves the formation of a high-energy phosphoric-sulfuric acid anhydride bond driven by GTP hydrolysis by CysN coupled to ATP hydrolysis by CysD. The sequence is that of Sulfate adenylyltransferase subunit 1 from Escherichia coli O157:H7.